A 113-amino-acid polypeptide reads, in one-letter code: Signal peptidase complex subunit 1 (113 aa).

The Cytoplasmic segment spans residues 1–32 (MDGMIAMLPAPLQQLSSHIDFQGQKVAERTYQ). Residues 33-53 (VILTLAGIIGFFVGYSTQQLS) traverse the membrane as a helical segment. The Lumenal segment spans residues 54-57 (YAMY). Residues 58-78 (TVMGAAVFTALIILPPWPFLF) traverse the membrane as a helical segment. Over 79–113 (RKNPIVWQTPIEEQEASSSSDNEKKDKKKETKKTK) the chain is Cytoplasmic. The segment at 89-113 (IEEQEASSSSDNEKKDKKKETKKTK) is disordered.

Belongs to the SPCS1 family. Component of the signal peptidase complex (SPC) composed of a catalytic subunit sec-11 and three accessory subunits spcs-1, spcs-2 and spcs-3. The complex induces a local thinning of the ER membrane which is used to measure the length of the signal peptide (SP) h-region of protein substrates. This ensures the selectivity of the complex towards h-regions shorter than 18-20 amino acids.

It is found in the endoplasmic reticulum membrane. Functionally, component of the signal peptidase complex (SPC) which catalyzes the cleavage of N-terminal signal sequences from nascent proteins as they are translocated into the lumen of the endoplasmic reticulum. Dispensable for SPC enzymatic activity. This Caenorhabditis briggsae protein is Signal peptidase complex subunit 1.